The chain runs to 117 residues: Large ribosomal subunit protein bL17 (117 aa).

The protein belongs to the bacterial ribosomal protein bL17 family. In terms of assembly, part of the 50S ribosomal subunit. Contacts protein L32.

This Dehalococcoides mccartyi (strain ATCC BAA-2100 / JCM 16839 / KCTC 5957 / BAV1) protein is Large ribosomal subunit protein bL17.